A 1042-amino-acid polypeptide reads, in one-letter code: Kinesin-like protein KIN-5A (1042 aa).

The segment covering 1–14 has biased composition (low complexity); sequence MDSNNSKKGSSVKS. The interval 1-45 is disordered; sequence MDSNNSKKGSSVKSPCQTPRSTEKSNRDFRVDSNSNSNPVSKNEK. The span at 21 to 31 shows a compositional bias: basic and acidic residues; it reads STEKSNRDFRV. The span at 32 to 41 shows a compositional bias: polar residues; it reads DSNSNSNPVS. The region spanning 50 to 392 is the Kinesin motor domain; that stretch reads NIQVIVRCRP…LDYAHRAKHI (343 aa). 136 to 143 is a binding site for ATP; sequence GQTGTGKT. The stretch at 480–517 forms a coiled coil; that stretch reads TAGLREKLDKTEKKLYETEQALLDLEEKHRQAVATIKE. Residues 1021–1042 form a disordered region; the sequence is KQMQNGEAKHVSNGRPPLTAIN.

This sequence belongs to the TRAFAC class myosin-kinesin ATPase superfamily. Kinesin family. KIN-5/BimC subfamily.

It localises to the cytoplasm. The protein resides in the cytoskeleton. The protein localises to the spindle. Its function is as follows. Responsible for microtubule translocation. May be important for the organization of phragmoplast-specific arrays of microtubules. Plays an essential role in stabilizing the mitotic spindle. Required during mitotic cytokinesis. This chain is Kinesin-like protein KIN-5A, found in Arabidopsis thaliana (Mouse-ear cress).